A 127-amino-acid chain; its full sequence is MORF4 family-associated protein 1 (127 aa).

Residues 92–126 (RAAKRCEKAEEKAKEIAKMAEMLVELVRRIEKSES) adopt a coiled-coil conformation.

This sequence belongs to the MORF4 family-associated protein family. In terms of assembly, found in a complex composed of MORF4L1, MRFAP1 and RB1. Interacts via its N-terminus with MORF4L1. Interacts with CSTB and MORF4L2.

The protein resides in the nucleus. It localises to the cytoplasm. The protein localises to the perinuclear region. The sequence is that of MORF4 family-associated protein 1 from Homo sapiens (Human).